We begin with the raw amino-acid sequence, 197 residues long: Protein GrpE (197 aa).

The segment covering 1–31 (MSDDTKKQDTAADAEVEKEMEGVPEHLRDDR) has biased composition (basic and acidic residues). The disordered stretch occupies residues 1–48 (MSDDTKKQDTAADAEVEKEMEGVPEHLRDDRGSEEDASDDLSAALESL).

This sequence belongs to the GrpE family. Homodimer.

It localises to the cytoplasm. Participates actively in the response to hyperosmotic and heat shock by preventing the aggregation of stress-denatured proteins, in association with DnaK and GrpE. It is the nucleotide exchange factor for DnaK and may function as a thermosensor. Unfolded proteins bind initially to DnaJ; upon interaction with the DnaJ-bound protein, DnaK hydrolyzes its bound ATP, resulting in the formation of a stable complex. GrpE releases ADP from DnaK; ATP binding to DnaK triggers the release of the substrate protein, thus completing the reaction cycle. Several rounds of ATP-dependent interactions between DnaJ, DnaK and GrpE are required for fully efficient folding. This Erythrobacter litoralis (strain HTCC2594) protein is Protein GrpE.